The following is a 440-amino-acid chain: Protein FPV117 (440 aa).

This sequence belongs to the poxviruses G5 family.

This chain is Protein FPV117, found in Fowlpox virus (strain NVSL) (FPV).